The following is a 151-amino-acid chain: Arginine regulator (151 aa).

It belongs to the ArgR family.

The protein resides in the cytoplasm. It participates in amino-acid degradation; L-arginine degradation via ADI pathway. Functionally, regulates the transcription of the arc operon, involved in arginine catabolism. The sequence is that of Arginine regulator (argR1) from Clostridium perfringens (strain 13 / Type A).